A 321-amino-acid polypeptide reads, in one-letter code: Cytochrome c biogenesis protein CcsA (321 aa).

8 consecutive transmembrane segments (helical) span residues 17–37 (IVSI…IVGL), 43–63 (KGMI…WIYS), 71–91 (LYES…VPKI), 98–118 (LSAI…SGLL), 143–163 (MVLS…LLVI), 225–245 (VISL…VWAN), 258–275 (ETWA…LHTR), and 286–306 (AIVA…VNLL).

This sequence belongs to the CcmF/CycK/Ccl1/NrfE/CcsA family. As to quaternary structure, may interact with Ccs1.

The protein resides in the plastid. It localises to the chloroplast thylakoid membrane. Its function is as follows. Required during biogenesis of c-type cytochromes (cytochrome c6 and cytochrome f) at the step of heme attachment. The protein is Cytochrome c biogenesis protein CcsA of Platanus occidentalis (Sycamore).